A 121-amino-acid polypeptide reads, in one-letter code: Putative SNURF-like protein (121 aa).

The protein belongs to the SNURF family.

The chain is Putative SNURF-like protein (SNURFL) from Homo sapiens (Human).